The primary structure comprises 111 residues: Ig kappa chain V-III region MOPC 70 (111 aa).

The framework-1 stretch occupies residues Asp-1–Cys-23. A disulfide bridge connects residues Cys-23 and Cys-92. Residues Arg-24 to Asn-38 form a complementarity-determining-1 region. Residues Trp-39–Tyr-53 form a framework-2 region. The interval Ala-54–Ser-60 is complementarity-determining-2. Residues Gly-61–Cys-92 are framework-3. The interval Gln-93–Thr-101 is complementarity-determining-3. A framework-4 region spans residues Phe-102–Lys-111.

This Mus musculus (Mouse) protein is Ig kappa chain V-III region MOPC 70.